The primary structure comprises 424 residues: Glutamate-1-semialdehyde 2,1-aminomutase (424 aa).

Lysine 268 is subject to N6-(pyridoxal phosphate)lysine.

This sequence belongs to the class-III pyridoxal-phosphate-dependent aminotransferase family. HemL subfamily. Pyridoxal 5'-phosphate serves as cofactor.

It localises to the cytoplasm. It catalyses the reaction (S)-4-amino-5-oxopentanoate = 5-aminolevulinate. It participates in porphyrin-containing compound metabolism; protoporphyrin-IX biosynthesis; 5-aminolevulinate from L-glutamyl-tRNA(Glu): step 2/2. This chain is Glutamate-1-semialdehyde 2,1-aminomutase, found in Methanosarcina acetivorans (strain ATCC 35395 / DSM 2834 / JCM 12185 / C2A).